We begin with the raw amino-acid sequence, 152 residues long: Protein IpgF (152 aa).

The first 17 residues, 1–17 (MSRFVFILLCFIPHLGR), serve as a signal peptide directing secretion.

It belongs to the IagB/IpgF/P19 family.

The polypeptide is Protein IpgF (ipgF) (Shigella flexneri).